The sequence spans 144 residues: MPLYEHVLIARQDLSNAQAEGLIEHFSTVIGDNGGKVLGTEYWGVKTMAYKINKNRKGHYGFLRTDAPSAAVQEMERLARLHDDVMRVLTIKVDGHDEGPSVQMQKRDDRGDREERGDRGDRGDRGPRGDRGPREDRGPRPERR.

The interval 92 to 144 is disordered; that stretch reads KVDGHDEGPSVQMQKRDDRGDREERGDRGDRGDRGPRGDRGPREDRGPRPERR. Over residues 93–144 the composition is skewed to basic and acidic residues; it reads VDGHDEGPSVQMQKRDDRGDREERGDRGDRGDRGPRGDRGPREDRGPRPERR.

The protein belongs to the bacterial ribosomal protein bS6 family.

Functionally, binds together with bS18 to 16S ribosomal RNA. This is Small ribosomal subunit protein bS6 (rpsF) from Rhodobacter capsulatus (strain ATCC BAA-309 / NBRC 16581 / SB1003).